The primary structure comprises 135 residues: MRAFLRNQKYEDMHNIIHILQIRKLRHRLSNFPRLPGILAPETVLLPFCYKVFRKKEKVKRSQKATEFIDYSIEQSHHAILTPLQTHLTMKGSSMKCSSLSSEAILFTLTLQLTQTLGLECCLLYLSKTIHPQII.

As to expression, expressed in colon, prostate, small intestine, testis and spleen, with lower expression in thymus, ovary, and peripheral blood leukocytes. Up-regulated expression in prostate, breast, and bladder cancer, but not in lung and colon cancer.

Its subcellular location is the cytoplasm. It is found in the nucleus. In Homo sapiens (Human), this protein is Prostate and breast cancer overexpressed gene 1 protein (PBOV1).